We begin with the raw amino-acid sequence, 316 residues long: Ornithine carbamoyltransferase (316 aa).

Residues 57 to 60 (STRT), Gln-84, Arg-108, and 135 to 138 (HPCQ) contribute to the carbamoyl phosphate site. Residues Asn-166, Asp-230, and 234–235 (SM) contribute to the L-ornithine site. Carbamoyl phosphate contacts are provided by residues 269–270 (CL) and Arg-297.

Belongs to the aspartate/ornithine carbamoyltransferase superfamily. OTCase family.

The protein localises to the cytoplasm. It carries out the reaction carbamoyl phosphate + L-ornithine = L-citrulline + phosphate + H(+). It participates in amino-acid degradation; L-arginine degradation via ADI pathway; carbamoyl phosphate from L-arginine: step 2/2. Reversibly catalyzes the transfer of the carbamoyl group from carbamoyl phosphate (CP) to the N(epsilon) atom of ornithine (ORN) to produce L-citrulline. This is Ornithine carbamoyltransferase from Bacillus cereus (strain AH187).